The chain runs to 467 residues: Regulatory protein NPR6 (467 aa).

The BTB domain maps to 27-111; that stretch reads SDVTFSVEGR…LYSGQVSIVP (85 aa). Residues 117–131 form a C2HC NPR-type zinc finger; sequence RSNCGDRGCWHTHCT. Zn(2+) is bound by residues cysteine 120, cysteine 125, histidine 127, and cysteine 130. 4 ANK repeats span residues 247–276, 277–306, 311–340, and 344–378; these read QKIRRMRRALDSSDVELVKLMVMGEGLNLD, ESLALIYAVENCSREVVKALLELGAADVNY, TGKTALHIAAEMVSPDMVAVLLDHHADPNV, and DGITPLDILRTLTSDFLFKGAIPGLTHIEPNKLRL. The segment at 434 to 467 is disordered; the sequence is RDIGDDNSNQREGMNLHHHHHDPSTMYHHHHHHF. Over residues 449–467 the composition is skewed to basic residues; it reads LHHHHHDPSTMYHHHHHHF.

Belongs to the plant 'ANKYRIN-BTB/POZ' family. 'NOOT-BOP-COCH-like' (NBCL) subfamily. Homodimer or heterodimer with BOP2. Interacts with PAN.

It localises to the cytoplasm. Its subcellular location is the nucleus. The protein operates within protein modification; protein ubiquitination. Functionally, may act as a substrate-specific adapter of an E3 ubiquitin-protein ligase complex (CUL3-RBX1-BTB) which mediates the ubiquitination and subsequent proteasomal degradation of target proteins. Acts redundantly with BOP2. BOP1/2 promote leaf and floral meristem fate and determinacy in a pathway targeting AP1 and AGL24. BOP1/2 act as transcriptional co-regulators through direct interaction with TGA factors, including PAN, a direct regulator of AP1. Controls lateral organ fate through positive regulation of adaxial-abaxial polarity genes ATHB-14/PHB, YAB1/FIL and YAB3, and through positive regulation of LOB domain-containing genes LOB, LBD6/AS2 and LBD36. Promotes and maintains a developmentally determinate state in leaf cells through the negative regulation of JAG, JGL and class I KNOX genes. Is also involved in nectary development, formation of normal abscission zones (AZs) and suppression of bract formation, probably by regulating the cell wall disorganization. The polypeptide is Regulatory protein NPR6 (Arabidopsis thaliana (Mouse-ear cress)).